Here is a 145-residue protein sequence, read N- to C-terminus: uncharacterized protein (145 aa).

To B.subtilis XkdJ.

This is an uncharacterized protein from Bacillus subtilis (strain 168).